The following is a 132-amino-acid chain: Hydrogenase maturation factor HypA (132 aa).

Residue histidine 2 coordinates Ni(2+). Positions 74, 77, 91, and 94 each coordinate Zn(2+).

It belongs to the HypA/HybF family.

Involved in the maturation of [NiFe] hydrogenases. Required for nickel insertion into the metal center of the hydrogenase. The sequence is that of Hydrogenase maturation factor HypA from Synechococcus sp. (strain JA-2-3B'a(2-13)) (Cyanobacteria bacterium Yellowstone B-Prime).